We begin with the raw amino-acid sequence, 1728 residues long: Mitochondrial 3' processome subunit 1 (1728 aa).

The N-terminal 117 residues, 1-117, are a transit peptide targeting the mitochondrion; that stretch reads MRRLILSQTL…AGKMTGSSRF (117 aa). 3 disordered regions span residues 45–71, 88–156, and 829–863; these read HRKREGRMYGKPLRPVSDGENGASGDG, ESPV…IGQQ, and GCNRDGGPSRPNTATDSANKKVVSGKQTDNLPKGT.

Component of the mitochondrial 3' processome (MPsome) complex composed at least of terminal uridylyltransferase KRET1/TUT1, 3'-5' exonuclease DSS1, MPSS1, MPSS2 and MPSS3. Within the complex, interacts with KRET1.

It is found in the mitochondrion. In terms of biological role, as part of the mitochondrial 3' processome (MPsome), involved in the maturation of guided RNA (gRNA) precursors. In Trypanosoma brucei brucei, this protein is Mitochondrial 3' processome subunit 1.